Reading from the N-terminus, the 491-residue chain is Peptidoglycan D,D-transpeptidase PbpA (491 aa).

Residues 1-8 (MNTSLRRV) lie on the Cytoplasmic side of the membrane. A helical; Signal-anchor for type II membrane protein membrane pass occupies residues 9–29 (AVAIMVLIVLLLANATVTQVF). Over 30 to 491 (AADGLRADPR…TIAAALREGS (462 aa)) the chain is Periplasmic. The segment at 160 to 484 (GSVVALEPST…AAPIGRATIA (325 aa)) is transpeptidase. Residue serine 222 is the Acyl-ester intermediate of the active site.

Belongs to the transpeptidase family.

The protein localises to the cell inner membrane. The enzyme catalyses Preferential cleavage: (Ac)2-L-Lys-D-Ala-|-D-Ala. Also transpeptidation of peptidyl-alanyl moieties that are N-acyl substituents of D-alanine.. Its pathway is cell wall biogenesis; peptidoglycan biosynthesis. In terms of biological role, transpeptidase that catalyzes cross-linking of the peptidoglycan cell wall. Required for the regulation of cell length. The chain is Peptidoglycan D,D-transpeptidase PbpA (pbpA) from Mycolicibacterium smegmatis (strain ATCC 700084 / mc(2)155) (Mycobacterium smegmatis).